The chain runs to 77 residues: Putative defensin-like protein 162 (77 aa).

The signal sequence occupies residues 1 to 27; it reads MAKQLCSYMFISMFILSAFLALPSAEG. Intrachain disulfides connect Cys34/Cys77, Cys44/Cys63, Cys49/Cys71, and Cys53/Cys73.

This sequence belongs to the DEFL family.

The protein localises to the secreted. This Arabidopsis thaliana (Mouse-ear cress) protein is Putative defensin-like protein 162 (LCR37).